The chain runs to 316 residues: Oligopeptide transport system permease protein AppB (316 aa).

The next 6 membrane-spanning stretches (helical) occupy residues 10–30 (LMSI…MKAA), 100–120 (LLLM…FGVL), 138–158 (FIGL…VLSV), 177–197 (IFDR…ADMA), 240–260 (LPVI…SVVV), and 290–310 (VISA…YAIV). Residues 96 to 303 (LPNTLLLMLV…VLVVVGNLIA (208 aa)) enclose the ABC transmembrane type-1 domain.

It belongs to the binding-protein-dependent transport system permease family. OppBC subfamily.

Its subcellular location is the cell membrane. Its function is as follows. This protein is a component of an oligopeptide permease, a binding protein-dependent transport system. This APP system can completely substitute for the OPP system in both sporulation and genetic competence, though, unlike OPP, is incapable of transporting tripeptides. Probably responsible for the translocation of the substrate across the membrane. This Bacillus subtilis (strain 168) protein is Oligopeptide transport system permease protein AppB (appB).